The primary structure comprises 297 residues: UDP-N-acetylenolpyruvoylglucosamine reductase (297 aa).

The 167-residue stretch at glutamine 18–glycine 184 folds into the FAD-binding PCMH-type domain. Arginine 163 is a catalytic residue. Residue serine 214 is the Proton donor of the active site. Glutamate 285 is a catalytic residue.

Requires FAD as cofactor.

It localises to the cytoplasm. It catalyses the reaction UDP-N-acetyl-alpha-D-muramate + NADP(+) = UDP-N-acetyl-3-O-(1-carboxyvinyl)-alpha-D-glucosamine + NADPH + H(+). It participates in cell wall biogenesis; peptidoglycan biosynthesis. Its function is as follows. Cell wall formation. This is UDP-N-acetylenolpyruvoylglucosamine reductase from Gloeobacter violaceus (strain ATCC 29082 / PCC 7421).